A 712-amino-acid polypeptide reads, in one-letter code: Lactoperoxidase (712 aa).

The first 26 residues, 1-26, serve as a signal peptide directing secretion; that stretch reads MRVLLHLPALLASLILLQAAASTTRA. Positions 27-80 are excised as a propeptide; that stretch reads QTTRTSAISDTVSQAKVQVNKAFLDSRTRLKTAMSSETPTSRQLSEYLKHAKGR. Asn106 carries N-linked (GlcNAc...) asparagine glycosylation. An intrachain disulfide couples Cys132 to Cys145. N-linked (GlcNAc...) asparagine glycosylation is present at Asn212. Asp225 serves as a coordination point for heme b. The Proton acceptor role is filled by His226. Position 227 (Asp227) interacts with Ca(2+). Disulfide bonds link Cys246–Cys256 and Cys250–Cys274. Ca(2+) is bound by residues Thr301, Phe303, Asp305, and Ser307. Ser315 bears the Phosphoserine mark. N-linked (GlcNAc...) asparagine glycans are attached at residues Asn322 and Asn358. An intrachain disulfide couples Cys354 to Cys365. Glu375 and His468 together coordinate heme b. Tyr482 is modified (3'-nitrotyrosine). 2 cysteine pairs are disulfide-bonded: Cys573/Cys630 and Cys671/Cys696.

Belongs to the peroxidase family. XPO subfamily. The cofactor is Ca(2+). Requires heme b as cofactor. In terms of tissue distribution, mammary gland, milk and salivary gland. Found in bronchial submucosal glands.

It is found in the secreted. The protein localises to the cytoplasm. It carries out the reaction 2 a phenolic donor + H2O2 = 2 a phenolic radical donor + 2 H2O. The enzyme catalyses thiocyanate + H2O2 + H(+) = hypothiocyanous acid + H2O. It catalyses the reaction iodide + H2O2 = hypoiodite + H2O. In terms of biological role, heme-containing oxidoreductase which catalyzes the conversion of thiocyanate (SCN(-)) into antimicrobial agent hypothiocyanous acid (OSCN(-)) in the presence of hydrogen peroxide (H2O2). Also involved in the conversion of iodide (I(-)) into hypoiodite (IO(-)) in the presence of H2O2. Responsible for the inactivation of a wide range of micro-organisms and hence, important component of defense mechanism. Shows antibacterial properties against Pseudomonas aeruginosa. The lactoperoxidase-SCN(-)-H2O2 system shows antibacterial properties against Burkholderia cepacia and Haemophilus influenzae in vitro. Present in mammary and salivary gland secretions and may contribute to airway host defense against infection. May contribute to maintaining an appropriate H2O2 cellular level, therefore protecting cells from H2O2-caused injuries and inflammation. The polypeptide is Lactoperoxidase (Homo sapiens (Human)).